The sequence spans 44 residues: U9-ctenitoxin-Co1a (44 aa).

Cystine bridges form between Cys3/Cys17, Cys10/Cys23, Cys16/Cys33, and Cys25/Cys31.

In terms of tissue distribution, expressed by the venom gland.

It localises to the secreted. Functionally, insecticidal neurotoxin that reversibly inhibits the N-methyl-D-aspartate (NMDA)-subtype of ionotropic glutamate receptor (GRIN) and inhibits inactivation of insect sodium channels (Nav). In vivo, is highly toxic to insects. The protein is U9-ctenitoxin-Co1a of Ctenus ornatus (Brazilian spider).